A 693-amino-acid polypeptide reads, in one-letter code: Protein-glutamine gamma-glutamyltransferase E (693 aa).

N-acetylalanine is present on alanine 2. Tyrosine 111 is subject to Phosphotyrosine. Threonine 112 is subject to Phosphothreonine. Alanine 222, asparagine 225, asparagine 227, aspartate 228, and asparagine 230 together coordinate Ca(2+). Cysteine 273 is an active-site residue. 5 residues coordinate Ca(2+): aspartate 302, aspartate 304, asparagine 306, serine 308, and aspartate 325. Residues histidine 331 and aspartate 354 contribute to the active site. Asparagine 394, serine 416, glutamate 444, and glutamate 449 together coordinate Ca(2+).

The protein belongs to the transglutaminase superfamily. Transglutaminase family. Consists of two polypeptide chains, which are synthesized as a precursor form of a single polypeptide. Requires Ca(2+) as cofactor. In terms of processing, activated by proteolytic processing. In vitro activation is commonly achieved by cleavage with dispase, a neutral bacterial protease. Dispase cleavage site was proposed to lie between Ser-470 and Ser-471 or between Pro-465 and Phe-466. Physiological activation may be catalyzed by CTSL and, to a lesser extent, by CTSS, but not by CTSB, CTSD nor CTSV.

The protein localises to the cytoplasm. The catalysed reaction is L-glutaminyl-[protein] + L-lysyl-[protein] = [protein]-L-lysyl-N(6)-5-L-glutamyl-[protein] + NH4(+). In terms of biological role, catalyzes the calcium-dependent formation of isopeptide cross-links between glutamine and lysine residues in various proteins, as well as the conjugation of polyamines to proteins. Involved in the formation of the cornified envelope (CE), a specialized component consisting of covalent cross-links of proteins beneath the plasma membrane of terminally differentiated keratinocytes. Catalyzes small proline-rich proteins (SPRR1 and SPRR2) and LOR cross-linking to form small interchain oligomers, which are further cross-linked by TGM1 onto the growing CE scaffold. In hair follicles, involved in cross-linking structural proteins to hardening the inner root sheath. This Homo sapiens (Human) protein is Protein-glutamine gamma-glutamyltransferase E (TGM3).